Here is a 301-residue protein sequence, read N- to C-terminus: B3 domain-containing protein At5g18090 (301 aa).

Positions 18–113 (FFKILRSADL…CFTVDIYQID (96 aa)) form a DNA-binding region, TF-B3 1. 2 disordered regions span residues 123 to 142 (SATI…NNIY) and 153 to 194 (SWSE…KMKV). Over residues 133–142 (NKREQRNNIY) the composition is skewed to basic and acidic residues. Positions 209–301 (VPEFTLTIKK…PTEMLVRVSK (93 aa)) form a DNA-binding region, TF-B3 2.

The protein localises to the nucleus. This chain is B3 domain-containing protein At5g18090, found in Arabidopsis thaliana (Mouse-ear cress).